A 66-amino-acid chain; its full sequence is Defensin-B1 (66 aa).

An N-terminal signal peptide occupies residues 1–23 (MNAHVLLLCTILFLLVHTPPVLG). 3 disulfides stabilise this stretch: C29-C56, C36-C50, and C40-C57. Positions 61–66 (VLMEDG) are excised as a propeptide.

Belongs to the beta-defensin family. As to expression, expressed at low levels in kidney, lung, and spleen.

It localises to the secreted. Its function is as follows. Has bactericidal activity. May act as a ligand for C-C chemokine receptor CCR6. Positively regulates the sperm motility and bactericidal activity in a CCR6-dependent manner. Binds to CCR6 and triggers Ca2+ mobilization in the sperm which is important for its motility. The protein is Defensin-B1 of Ornithorhynchus anatinus (Duckbill platypus).